A 292-amino-acid polypeptide reads, in one-letter code: Formamidopyrimidine-DNA glycosylase (292 aa).

Pro-2 serves as the catalytic Schiff-base intermediate with DNA. Glu-3 functions as the Proton donor in the catalytic mechanism. Residue Lys-58 is the Proton donor; for beta-elimination activity of the active site. 3 residues coordinate DNA: His-98, Arg-128, and Arg-173. The segment at 258 to 292 adopts an FPG-type zinc-finger fold; it reads LVYDRAGQPCRVCATPVRQIVQGQRSTFYCPNCQH. Arg-282 (proton donor; for delta-elimination activity) is an active-site residue.

Belongs to the FPG family. As to quaternary structure, monomer. Requires Zn(2+) as cofactor.

The enzyme catalyses Hydrolysis of DNA containing ring-opened 7-methylguanine residues, releasing 2,6-diamino-4-hydroxy-5-(N-methyl)formamidopyrimidine.. It carries out the reaction 2'-deoxyribonucleotide-(2'-deoxyribose 5'-phosphate)-2'-deoxyribonucleotide-DNA = a 3'-end 2'-deoxyribonucleotide-(2,3-dehydro-2,3-deoxyribose 5'-phosphate)-DNA + a 5'-end 5'-phospho-2'-deoxyribonucleoside-DNA + H(+). Involved in base excision repair of DNA damaged by oxidation or by mutagenic agents. Acts as a DNA glycosylase that recognizes and removes damaged bases. Has a preference for oxidized purines, such as 7,8-dihydro-8-oxoguanine (8-oxoG). Has AP (apurinic/apyrimidinic) lyase activity and introduces nicks in the DNA strand. Cleaves the DNA backbone by beta-delta elimination to generate a single-strand break at the site of the removed base with both 3'- and 5'-phosphates. The protein is Formamidopyrimidine-DNA glycosylase of Cupriavidus necator (strain ATCC 17699 / DSM 428 / KCTC 22496 / NCIMB 10442 / H16 / Stanier 337) (Ralstonia eutropha).